A 517-amino-acid polypeptide reads, in one-letter code: Crotonobetaine/carnitine--CoA ligase (517 aa).

It belongs to the ATP-dependent AMP-binding enzyme family.

It carries out the reaction 4-(trimethylamino)butanoate + ATP + CoA = 4-(trimethylamino)butanoyl-CoA + AMP + diphosphate. The enzyme catalyses crotonobetaine + ATP + CoA = crotonobetainyl-CoA + AMP + diphosphate. The catalysed reaction is (R)-carnitine + ATP + CoA = (R)-carnitinyl-CoA + AMP + diphosphate. It participates in amine and polyamine metabolism; carnitine metabolism. Its function is as follows. Catalyzes the transfer of CoA to carnitine, generating the initial carnitinyl-CoA needed for the CaiB reaction cycle. Also has activity toward crotonobetaine and gamma-butyrobetaine. This is Crotonobetaine/carnitine--CoA ligase from Escherichia coli O8 (strain IAI1).